The primary structure comprises 432 residues: 3-phosphoshikimate 1-carboxyvinyltransferase (432 aa).

3-phosphoshikimate is bound by residues lysine 22, serine 23, and arginine 27. Lysine 22 serves as a coordination point for phosphoenolpyruvate. Phosphoenolpyruvate-binding residues include glycine 96 and arginine 127. 3-phosphoshikimate contacts are provided by serine 173, serine 174, glutamine 175, serine 201, aspartate 316, asparagine 339, and lysine 343. Glutamine 175 contributes to the phosphoenolpyruvate binding site. Aspartate 316 acts as the Proton acceptor in catalysis. Residues arginine 347, arginine 391, and lysine 416 each coordinate phosphoenolpyruvate.

It belongs to the EPSP synthase family. As to quaternary structure, monomer.

The protein resides in the cytoplasm. The enzyme catalyses 3-phosphoshikimate + phosphoenolpyruvate = 5-O-(1-carboxyvinyl)-3-phosphoshikimate + phosphate. Its pathway is metabolic intermediate biosynthesis; chorismate biosynthesis; chorismate from D-erythrose 4-phosphate and phosphoenolpyruvate: step 6/7. Functionally, catalyzes the transfer of the enolpyruvyl moiety of phosphoenolpyruvate (PEP) to the 5-hydroxyl of shikimate-3-phosphate (S3P) to produce enolpyruvyl shikimate-3-phosphate and inorganic phosphate. In Actinobacillus pleuropneumoniae serotype 5b (strain L20), this protein is 3-phosphoshikimate 1-carboxyvinyltransferase.